The primary structure comprises 488 residues: UDP-N-acetylmuramate--L-alanine ligase (488 aa).

ATP is bound at residue 129–135 (GTHGKTT).

Belongs to the MurCDEF family.

The protein localises to the cytoplasm. The catalysed reaction is UDP-N-acetyl-alpha-D-muramate + L-alanine + ATP = UDP-N-acetyl-alpha-D-muramoyl-L-alanine + ADP + phosphate + H(+). Its pathway is cell wall biogenesis; peptidoglycan biosynthesis. Cell wall formation. The sequence is that of UDP-N-acetylmuramate--L-alanine ligase from Chromohalobacter salexigens (strain ATCC BAA-138 / DSM 3043 / CIP 106854 / NCIMB 13768 / 1H11).